Consider the following 302-residue polypeptide: Zygote arrest protein 2.S (302 aa).

Disordered stretches follow at residues 15 to 46 (YGGNFGQNPHRPQAFPKNKQAAWKSNKSSEPP), 88 to 117 (VDTGVQCSLGPRTLRRPPPPPSSPVKPTDC), and 138 to 195 (LPQG…EPNK). A compositionally biased stretch (basic and acidic residues) spans 159 to 178 (LKDRGPSPEEKEPETKEALE). The 3CxxC-type zinc finger occupies 203-288 (QKYGYFHCKD…QELCGRCKNK (86 aa)).

Belongs to the ZAR1 family. As to expression, oocyte-specific.

It is found in the cytoplasm. The protein localises to the cytoplasmic ribonucleoprotein granule. In terms of biological role, mRNA-binding protein required for maternal mRNA storage, translation and degradation during oocyte maturation. Probably promotes formation of some phase-separated membraneless compartment that stores maternal mRNAs in oocytes: acts by undergoing liquid-liquid phase separation upon binding to maternal mRNAs. Binds to the 3'-UTR of maternal mRNAs, inhibiting their translation. This Xenopus laevis (African clawed frog) protein is Zygote arrest protein 2.S.